A 75-amino-acid polypeptide reads, in one-letter code: UPF0352 protein VV1166 (75 aa).

This sequence belongs to the UPF0352 family.

In Vibrio vulnificus (strain YJ016), this protein is UPF0352 protein VV1166.